Here is a 582-residue protein sequence, read N- to C-terminus: MGSDSTLSLPSSSPPCNNRSSVPPTFTTRIFSDVAGDIIVVVDGESFLLHKFPLVARSGKMRKMVRDLKDSSSMIELRDFPGGPSTFELTMKFCYGINFDITAFNVVSLRCAAGYLEMTEDYKEQNLIFRAENYLDQIVFRSFHESVLVLCSCETQEIAETYEIPDRCVEAIAMNACRKQLVSGLSEELKGRDCLEMWTEELSALGIDYYVQVVSAMARLSVRSESIVASLVHYAKTSLKGIIDRNCQEQRKIVEAMVNLLPNDEKGSYSLSIIPLGFLFGMLKVGTIIDIEISCRLELERRIGHQLETASLDDLLIPSVQNEDSMYDVDTVHRILTFFLERIEEEDDECGYDSDSTGQHSSLLKVGRIMDAYLVEIAPDPYLSLHKFTAIIETLPEHSRIVDDGIYRAIDMYLKAHPLLTEEERKKLCNFIDCKKLSQEASNHVAQNDRLPVQMVVRVLYTEQLRLKKALSGDSEEGSWVLPSGVQSRAVSPRDTYAALRRENRELKLEISRMRVRVSELEKEHNLMKHEMMEKSGNNGGTFLTSLSKGIGRIATFGGETRQKVNRKSRSVSERKSSRSGR.

The interval methionine 1–serine 21 is disordered. Residues glycine 36–alanine 103 form the BTB domain. The NPH3 domain occupies glutamate 196–arginine 466. Phosphotyrosine is present on tyrosine 407. Residues glycine 558–arginine 582 are disordered. The span at serine 571–arginine 582 shows a compositional bias: basic and acidic residues.

It belongs to the NPH3 family.

Its pathway is protein modification; protein ubiquitination. Its function is as follows. May act as a substrate-specific adapter of an E3 ubiquitin-protein ligase complex (CUL3-RBX1-BTB) which mediates the ubiquitination and subsequent proteasomal degradation of target proteins. In Arabidopsis thaliana (Mouse-ear cress), this protein is Putative BTB/POZ domain-containing protein At3g08660.